A 429-amino-acid polypeptide reads, in one-letter code: Uterine milk protein (429 aa).

The N-terminal stretch at Met-1–Cys-25 is a signal peptide. 2 N-linked (GlcNAc...) asparagine glycosylation sites follow: Asn-222 and Asn-268.

The protein belongs to the serpin family. UTMP subfamily. Post-translationally, glycosylated; carries the so-called mannose 6-phosphate lysosomal recognition marker on its carbohydrate chains. In terms of tissue distribution, secreted by ovine endometrium under the influence of progesterone.

This Ovis aries (Sheep) protein is Uterine milk protein.